Reading from the N-terminus, the 123-residue chain is Putative iron-sulfur cluster insertion protein ErpA (123 aa).

Positions 51, 115, and 117 each coordinate iron-sulfur cluster.

The protein belongs to the HesB/IscA family. Homodimer. Requires iron-sulfur cluster as cofactor.

Functionally, required for insertion of 4Fe-4S clusters. This Burkholderia ambifaria (strain ATCC BAA-244 / DSM 16087 / CCUG 44356 / LMG 19182 / AMMD) (Burkholderia cepacia (strain AMMD)) protein is Putative iron-sulfur cluster insertion protein ErpA.